The chain runs to 505 residues: Alpha-1-syntrophin (505 aa).

Disordered stretches follow at residues 1-24 (MASG…AGAG) and 40-75 (LTVS…AAPP). 2 consecutive PH domains span residues 6-269 (RAPR…AQIN) and 293-401 (DIKQ…DGCH). Over residues 9–18 (RTGLLELRAG) the composition is skewed to low complexity. A PDZ domain is found at 87–170 (RVTVRKADAG…EVVLEVKYMK (84 aa)). Ser101, Ser184, Ser189, Ser193, and Ser200 each carry phosphoserine. Residues 183–212 (TSVGWDSPPASPLQRQPSSPGPQTRNLSEA) are disordered. Polar residues predominate over residues 195 to 209 (LQRQPSSPGPQTRNL). Positions 449–505 (PFEKLQMSSDDGASLLFLDFGGAEGEIQLDLHSCPKTMVFIIHSFLSAKVTRLGLLA) constitute an SU domain. Residues 483–505 (PKTMVFIIHSFLSAKVTRLGLLA) form a calmodulin-binding region.

It belongs to the syntrophin family. Monomer and homodimer. Interacts with the dystrophin related protein DTNA; SGCG of the dystrophin glycoprotein complex; NOS1; GRB2; GA; TGFA; MAPK12 and the sodium channel proteins SCN4A and SCN5A. Interacts with the dystrophin protein DMD in a calmodulin dependent manner and with related protein UTRN; SGCA of the dystrophin glycoprotein complex; F-actin; calmodulin and with the other members of the syntrophin family SNTB1 and SNTB2. Interacts with MYOC; regulates muscle hypertrophy. Interacts with DTNB. Post-translationally, phosphorylated by CaM-kinase II. Phosphorylation may inhibit the interaction with DMD. As to expression, highly expressed in skeletal and cardiac muscle and is also detected in brain.

The protein localises to the cell membrane. It is found in the sarcolemma. The protein resides in the cell junction. It localises to the cytoplasm. Its subcellular location is the cytoskeleton. Functionally, adapter protein that binds to and probably organizes the subcellular localization of a variety of membrane proteins. May link various receptors to the actin cytoskeleton and the extracellular matrix via dystrophin glycoprotein complex. Plays an important role in synapse formation and in the organization of UTRN and acetylcholine receptors at the neuromuscular synapse. Binds to phosphatidylinositol 4,5-bisphosphate. The polypeptide is Alpha-1-syntrophin (SNTA1) (Oryctolagus cuniculus (Rabbit)).